Consider the following 305-residue polypeptide: Large ribosomal subunit protein uL3c (305 aa).

A chloroplast-targeting transit peptide spans 1-84 (MAAILPTFSI…AVGGLEIKMM (84 aa)). The interval 228-256 (SHRALGSIGAGTTPGHVYKGKKMPGRMGG) is disordered.

Component of the chloroplast large ribosomal subunit (LSU). Mature 70S chloroplast ribosomes of higher plants consist of a small (30S) and a large (50S) subunit. The 30S small subunit contains 1 molecule of ribosomal RNA (16S rRNA) and 24 different proteins. The 50S large subunit contains 3 rRNA molecules (23S, 5S and 4.5S rRNA) and 33 different proteins.

It localises to the plastid. The protein localises to the chloroplast. In terms of biological role, component of the chloroplast ribosome (chloro-ribosome), a dedicated translation machinery responsible for the synthesis of chloroplast genome-encoded proteins, including proteins of the transcription and translation machinery and components of the photosynthetic apparatus. The polypeptide is Large ribosomal subunit protein uL3c (RPL3) (Spinacia oleracea (Spinach)).